The sequence spans 581 residues: Semenogelin-2 (581 aa).

The N-terminal stretch at 1 to 23 (MKSIILFVLSLLLILEKQAAVMG) is a signal peptide. Disordered regions lie at residues 24-62 (QKGG…SKGS), 132-157 (GGKA…GISS), 173-194 (KEQA…QSSY), and 271-581 (NLNQ…PIST). Polar residues-rich tracts occupy residues 138–157 (GTQN…GISS) and 174–194 (EQAS…QSSY). Residues 291–310 (HTEERQLNHGEKSVQKDISK) are compositionally biased toward basic and acidic residues. Over residues 324 to 333 (KSQNQVTIHS) the composition is skewed to polar residues. The segment covering 334–344 (QDQEHGHKENK) has biased composition (basic and acidic residues). The span at 366-396 (KSVSKGSISIQTEEQIHGKSQNQVRIPSQAQ) shows a compositional bias: polar residues. Basic and acidic residues-rich tracts occupy residues 412–425 (TEER…KDIQ) and 455–464 (DQEHGHKENK). 2 stretches are compositionally biased toward polar residues: residues 481–497 (GKNT…SFQT) and 505–529 (SQIQ…SGQS). 2 stretches are compositionally biased toward basic and acidic residues: residues 530 to 545 (ADRE…KGRY) and 558 to 581 (TEHE…PIST).

This sequence belongs to the semenogelin family. In terms of assembly, interacts with SERPINA5.

It localises to the secreted. In terms of biological role, participates in the formation of a gel matrix (sperm coagulum) entrapping the accessory gland secretions and ejaculated spermatozoa. The sequence is that of Semenogelin-2 (SEMG2) from Pongo abelii (Sumatran orangutan).